The sequence spans 819 residues: MDTEGFGELLQQAEQLAAETEGISELPHVERNLQEIQQAGERLRSRTLTRTSQETADVKASVLLGSRGLDISHISQRLESLSAATTFEPLEPVKDTDIQGFLKNEKDNALLSAIEESRKRTFGMAEEYHRESMLVEWEQVKQRILHTLLASGEDALDFTQESEPSYISDVGPPGRSSLDNIEMAYARQIYIYNEKIVNGHLQPNLVDLCASVAELDDKSISDMWTMVKQMTDVLLTPATDALKNRSSVEVRMEFVRQALAYLEQSYKNYTLVTVFGNLHQAQLGGVPGTYQLVRSFLNIKLPAPLPGLQDGEVEGHPVWALIYYCMRCGDLLAASQVVNRAQHQLGEFKTWFQEYMNSKDRRLSPATENKLRLHYRRALRNNTDPYKRAVYCIIGRCDVTDNQSEVADKTEDYLWLKLNQVCFDDDGTSSPQDRLTLSQFQKQLLEDYGESHFTVNQQPFLYFQVLFLTAQFEAAVAFLFRMERLRCHAVHVALVLFELKLLLKSSGQSAQLLSHEPGDPPCLRRLNFVRLLMLYTRKFESTDPREALQYFYFLRDEKDSQGENMFLRCVSELVIESREFDMILGKLENDGSRKPGVIDKFTSDTKPIINKVASVAENKGLFEEAAKLYDLAKNADKVLELMNKLLSPVVPQISAPQSNKERLKNMALSIAERYRAQGISANKFVDSTFYLLLDLITFFDEYHSGHIDRAFDIIERLKLVPLNQESVEERVAAFRNFSDEIRHNLSEVLLATMNILFTQFKRLKGTSPSSSSRPQRVIEDRDSQLRSQARTLITFAGMIPYRTSGDTNARLVQMEVLMN.

Residue Thr49 is modified to Phosphothreonine. Phosphoserine occurs at positions 52, 66, 72, 75, 80, 430, and 767.

Belongs to the nucleoporin interacting component (NIC) family. As to quaternary structure, part of the nuclear pore complex (NPC). Component of the p62 complex, a complex composed of NUP62 and NUP54. Forms a complex with NUP35, NUP155, NUP205 and lamin B; the interaction with NUP35 is direct. Does not interact with TPR. Interacts with SMAD4 and IPO7; translocates SMAD4 to the nucleus through the NPC upon BMP7 stimulation resulting in activation of SMAD4 signaling. In terms of assembly, (Microbial infection) Interacts with SARS-CoV translation inhibitor nsp1; this interaction may disrupt nuclear pore function.

The protein localises to the nucleus membrane. It is found in the nucleus. Its subcellular location is the nuclear pore complex. The protein resides in the nucleus envelope. Plays a role in the nuclear pore complex (NPC) assembly and/or maintenance. May anchor nucleoporins, but not NUP153 and TPR, to the NPC. During renal development, regulates podocyte migration and proliferation through SMAD4 signaling. In Homo sapiens (Human), this protein is Nuclear pore complex protein Nup93 (NUP93).